The sequence spans 438 residues: MALRGVSVRLLSRGPGLHVLRTWVSSAAQTEKGGRTQSQLAKSSRPEFDWQDPLVLEEQLTTDEILIRDTFRTYCQERLMPRILLANRNEVFHREIISEMGELGVLGPTIKGYGCAGVSSVAYGLLARELERVDSGYRSAMSVQSSLVMHPIYAYGSEEQRQKYLPQLAKGELLGCFGLTEPNSGSDPSSMETRAHYNSSNKSYTLNGTKTWITNSPMADLFVVWARCEDGCIRGFLLEKGMRGLSAPRIQGKFSLRASATGMIIMDGVEVPEENVLPGASSLGGPFGCLNNARYGIAWGVLGASEFCLHTARQYALDRMQFGVPLARNQLIQKKLADMLTEITLGLHACLQLGRLKDQDKAAPEMVSLLKRNNCGKALDIARQARDMLGGNGISDEYHVIRHAMNLEAVNTYEGTHDIHALILGRAITGIQAFTASK.

The transit peptide at 1-44 (MALRGVSVRLLSRGPGLHVLRTWVSSAAQTEKGGRTQSQLAKSS) directs the protein to the mitochondrion. Substrate is bound by residues 138 to 139 (RS) and Ser-186. FAD-binding positions include 177 to 186 (FGLTEPNSGS) and 212 to 214 (WIT). An N6-acetyllysine modification is found at Lys-240. 287-294 (FGCLNNAR) lines the substrate pocket. FAD contacts are provided by residues Arg-319, Gln-330, and 387-391 (DMLGG). Glu-414 acts as the Proton acceptor in catalysis. Gly-415 lines the substrate pocket. FAD-binding positions include 416-418 (THD) and Phe-434.

This sequence belongs to the acyl-CoA dehydrogenase family. Homotetramer. FAD is required as a cofactor. In terms of tissue distribution, isoform Long and isoform Short are expressed in fibroblasts and liver.

It is found in the mitochondrion matrix. It catalyses the reaction glutaryl-CoA + oxidized [electron-transfer flavoprotein] + 2 H(+) = (2E)-butenoyl-CoA + reduced [electron-transfer flavoprotein] + CO2. Its pathway is amino-acid metabolism; lysine degradation. The protein operates within amino-acid metabolism; tryptophan metabolism. With respect to regulation, strongly inhibited by MCPA-CoA, a metabolite of hypoglycin which is present in unripened fruit of the ackee tree. Functionally, catalyzes the oxidative decarboxylation of glutaryl-CoA to crotonyl-CoA and CO(2) in the degradative pathway of L-lysine, L-hydroxylysine, and L-tryptophan metabolism. It uses electron transfer flavoprotein as its electron acceptor. Isoform Short is inactive. This Homo sapiens (Human) protein is Glutaryl-CoA dehydrogenase, mitochondrial (GCDH).